The primary structure comprises 444 residues: UDP-N-acetylglucosamine 1-carboxyvinyltransferase (444 aa).

22–23 contributes to the phosphoenolpyruvate binding site; sequence KN. Arginine 94 contributes to the UDP-N-acetyl-alpha-D-glucosamine binding site. The active-site Proton donor is the aspartate 119. Positions 309 and 331 each coordinate UDP-N-acetyl-alpha-D-glucosamine.

This sequence belongs to the EPSP synthase family. MurA subfamily.

It is found in the cytoplasm. The catalysed reaction is phosphoenolpyruvate + UDP-N-acetyl-alpha-D-glucosamine = UDP-N-acetyl-3-O-(1-carboxyvinyl)-alpha-D-glucosamine + phosphate. It participates in cell wall biogenesis; peptidoglycan biosynthesis. Functionally, cell wall formation. Adds enolpyruvyl to UDP-N-acetylglucosamine. The sequence is that of UDP-N-acetylglucosamine 1-carboxyvinyltransferase from Chlamydia abortus (strain DSM 27085 / S26/3) (Chlamydophila abortus).